The primary structure comprises 247 residues: Histone acetyltransferase MCC1 (247 aa).

One can recognise an N-acetyltransferase domain in the interval 25–198 (IHYRPINPND…DAFLFVYFIN (174 aa)).

This sequence belongs to the acetyltransferase family.

The enzyme catalyses L-lysyl-[protein] + acetyl-CoA = N(6)-acetyl-L-lysyl-[protein] + CoA + H(+). Histone acetyltransferase that probably regulates acetylation status of histone H3 during meiosis. Histone acetylation may influence recombination and chromosome segregation. The polypeptide is Histone acetyltransferase MCC1 (MCC1) (Arabidopsis thaliana (Mouse-ear cress)).